Reading from the N-terminus, the 234-residue chain is Zinc finger FYVE domain-containing protein 21 (234 aa).

The FYVE-type zinc-finger motif lies at 44-104 (DKECPRCMQC…QCADCALVSH (61 aa)). Residues C50, C53, C66, C69, C74, C77, C96, and C99 each coordinate Zn(2+). The PH-like stretch occupies residues 107-234 (AEFYDKQLKV…TKLLYESRDQ (128 aa)).

In terms of assembly, interacts with PTK2/FAK1. As to expression, widely expressed.

The protein resides in the cell junction. Its subcellular location is the focal adhesion. It is found in the cytoplasmic vesicle. The protein localises to the endosome. Its function is as follows. Plays a role in cell adhesion, and thereby in cell motility which requires repeated formation and disassembly of focal adhesions. Regulates microtubule-induced PTK2/FAK1 dephosphorylation, an event important for focal adhesion disassembly, as well as integrin beta-1/ITGB1 cell surface expression. This is Zinc finger FYVE domain-containing protein 21 (Zfyve21) from Mus musculus (Mouse).